The chain runs to 366 residues: 1-deoxy-D-xylulose 5-phosphate reductoisomerase (366 aa).

NADPH contacts are provided by T7, G8, S9, I10, G31, K32, N33, and N113. Residue K114 participates in 1-deoxy-D-xylulose 5-phosphate binding. E115 provides a ligand contact to NADPH. Position 133 (D133) interacts with Mn(2+). S134, E135, S158, and H181 together coordinate 1-deoxy-D-xylulose 5-phosphate. Position 135 (E135) interacts with Mn(2+). G187 lines the NADPH pocket. 4 residues coordinate 1-deoxy-D-xylulose 5-phosphate: S194, N199, K200, and E203. E203 serves as a coordination point for Mn(2+).

The protein belongs to the DXR family. It depends on Mg(2+) as a cofactor. Mn(2+) is required as a cofactor.

It catalyses the reaction 2-C-methyl-D-erythritol 4-phosphate + NADP(+) = 1-deoxy-D-xylulose 5-phosphate + NADPH + H(+). It participates in isoprenoid biosynthesis; isopentenyl diphosphate biosynthesis via DXP pathway; isopentenyl diphosphate from 1-deoxy-D-xylulose 5-phosphate: step 1/6. Catalyzes the NADPH-dependent rearrangement and reduction of 1-deoxy-D-xylulose-5-phosphate (DXP) to 2-C-methyl-D-erythritol 4-phosphate (MEP). This Helicobacter pylori (strain G27) protein is 1-deoxy-D-xylulose 5-phosphate reductoisomerase.